Consider the following 459-residue polypeptide: C-type lectin domain family 14 member A (459 aa).

Positions 1–21 are cleaved as a signal peptide; that stretch reads MRPALALCLLCPAFWPRPGNG. At 22–386 the chain is on the extracellular side; that stretch reads EHPTADRAAC…VSLTFDTSST (365 aa). Positions 33-173 constitute a C-type lectin domain; it reads ASGACYSLHH…LRTDGYLCKY (141 aa). Cysteine 143 and cysteine 162 form a disulfide bridge. N-linked (GlcNAc...) asparagine glycosylation is present at asparagine 189. In terms of domain architecture, EGF-like spans 246–288; sequence PCSGRYLLAGKCVELPDCLDHLGDFTCECAVGFELGKDGRSCE. N-linked (GlcNAc...) asparagine glycans are attached at residues asparagine 306, asparagine 317, and asparagine 370. The helical transmembrane segment at 387–407 threads the bilayer; it reads VVFILVSIAVIVLVVLTITVL. Topologically, residues 408-459 are cytoplasmic; sequence GLFKLCFHKSRSSRTGKGALDSPGVECDAEATSLHHSSTQCTDIGVKSGTVA. Serine 440 carries the post-translational modification Phosphoserine.

The protein localises to the membrane. The chain is C-type lectin domain family 14 member A (Clec14a) from Mus musculus (Mouse).